The sequence spans 531 residues: Acid-sensing ion channel 3 (531 aa).

Residues 1 to 43 (MKPTSGPEEARRPASDIRVFASNCSMHGLGHVFGPGSLSLRRG) are Cytoplasmic-facing. The chain crosses the membrane as a helical span at residues 44 to 61 (MWAAAVVLSVATFLYQVA). The Extracellular segment spans residues 62-441 (ERVRYYREFH…SELLGDIGGQ (380 aa)). Cystine bridges form between C92/C186, C164/C171, C282/C370, C315/C366, C319/C364, C328/C350, and C330/C342. N-linked (GlcNAc...) asparagine glycosylation occurs at N175. The segment at 285–307 (ASLNPNYEPEPSDPLGSPSPSPS) is disordered. A glycan (N-linked (GlcNAc...) asparagine) is linked at N398. The helical transmembrane segment at 442-460 (MGLFIGASLLTILEILDYL) threads the bilayer. The GAS motif; ion selectivity filter signature appears at 447–449 (GAS). The Cytoplasmic portion of the chain corresponds to 461–531 (CEVFRDKVLG…HRTCYLVTQL (71 aa)). The PDZ-binding motif lies at 528–531 (VTQL).

Belongs to the amiloride-sensitive sodium channel (TC 1.A.6) family. ASIC3 subfamily. In terms of assembly, can form homotrimeric channels. Heterotrimer; forms functional heterotrimers producing channel with different properties. Forms heterotrimers with ASIC2; gives rise to a biphasic current with a sustained current which discriminates poorly between Na(+) and K(+). Interacts with STOM; inhibits ASIC3 acid-evoked current. Interacts with LIN7B (via PDZ domain); increases ASIC3 expression at the plasma membrane. Interacts with MAGI1 (via PDZ domain); probably regulates ASIC3. Interacts with GOPC (via PDZ domain); probably regulates ASIC3. Interacts with DLG4 (via PDZ domain); reduces ASIC3 expression at the plasma membrane. Expressed by sensory neurons. Strongly expressed in brain, spinal cord, lung, lymph nodes, kidney, pituitary, heart and testis.

Its subcellular location is the cell membrane. The protein resides in the cytoplasm. The catalysed reaction is Na(+)(in) = Na(+)(out). It carries out the reaction K(+)(in) = K(+)(out). It catalyses the reaction Ca(2+)(in) = Ca(2+)(out). Inhibited by the diuretic drug amiloride. Inhibited by the diuretic drug triamterene. Potentiated by the vertebrate neuropeptide FF (NPFF) and the related FMRFamide. Specifically and reversibly inhibited by the a sea anemone toxin APETx2. Its function is as follows. Forms pH-gated heterotrimeric sodium channels that act as postsynaptic excitatory receptors in the nervous system. Upon extracellular acidification, these channels generate a biphasic current with a fast inactivating and a slow sustained phase. ASIC3 is more sensitive to protons and gates between closed, open, and desensitized states faster than other ASICs. Displays high selectivity for sodium ions but can also permit the permeation of other cations. As a neuronal acid sensor, probably contributes to mechanoreception, acid nociception, and heat nociception. By forming heterotrimeric channels with ASIC2, generates a biphasic current with a fast inactivating and a slow sustained phase, which in sensory neurons is proposed to mediate the pain induced by acidosis that occurs in ischemic, damaged or inflamed tissues. The sequence is that of Acid-sensing ion channel 3 from Homo sapiens (Human).